A 642-amino-acid chain; its full sequence is Threonine--tRNA ligase (642 aa).

Positions 1 to 61 (MPVITLPDGS…ENDAQLSIIT (61 aa)) constitute a TGS domain. The interval 243-534 (DHRKIGKQLD…LTEEFAGFFP (292 aa)) is catalytic. Lys286 carries the N6-acetyllysine modification. 3 residues coordinate Zn(2+): Cys334, His385, and His511.

The protein belongs to the class-II aminoacyl-tRNA synthetase family. Homodimer. Requires Zn(2+) as cofactor.

It localises to the cytoplasm. The enzyme catalyses tRNA(Thr) + L-threonine + ATP = L-threonyl-tRNA(Thr) + AMP + diphosphate + H(+). In terms of biological role, catalyzes the attachment of threonine to tRNA(Thr) in a two-step reaction: L-threonine is first activated by ATP to form Thr-AMP and then transferred to the acceptor end of tRNA(Thr). Also edits incorrectly charged L-seryl-tRNA(Thr). This Escherichia coli O157:H7 protein is Threonine--tRNA ligase.